Reading from the N-terminus, the 67-residue chain is Conotoxin TsMMSK-B022 (67 aa).

An N-terminal signal peptide occupies residues 1–22 (MMSKLGVLLTICLLLFPLTAVS). A propeptide spanning residues 23–50 (LDGDQPADLPELRAQDFAPERSPWFDPV) is cleaved from the precursor. Cystine bridges form between C53-C65, C54-C61, and C58-C64. The residue at position 63 (P63) is a 4-hydroxyproline.

This sequence belongs to the conotoxin M superfamily. Expressed by the venom duct.

It localises to the secreted. This is Conotoxin TsMMSK-B022 from Conus tessulatus (Tessellate cone).